We begin with the raw amino-acid sequence, 70 residues long: Beta-defensin 107A (70 aa).

Positions Met-1 to Thr-26 are cleaved as a signal peptide. Disulfide bonds link Cys-41/Cys-55 and Cys-45/Cys-64.

It belongs to the beta-defensin family.

Its subcellular location is the secreted. In terms of biological role, has antibacterial activity. The sequence is that of Beta-defensin 107A (DEFB107A) from Pan troglodytes (Chimpanzee).